The chain runs to 354 residues: Arginase-2, mitochondrial (354 aa).

The N-terminal 22 residues, 1–22 (MSLRSHLSRLLRTQVHSVRKKS), are a transit peptide targeting the mitochondrion. Mn(2+)-binding residues include His-120, Asp-143, His-145, and Asp-147. Residues 145 to 149 (HADIN), 156 to 158 (SGN), and Asp-202 contribute to the substrate site. Residues Asp-251 and Asp-253 each coordinate Mn(2+). Thr-265 and Glu-296 together coordinate substrate. Residues 332-354 (IVYDQLPTPSSPDESESEERVRI) are disordered.

Belongs to the arginase family. As to quaternary structure, homotrimer. It depends on Mn(2+) as a cofactor.

The protein localises to the mitochondrion. The enzyme catalyses L-arginine + H2O = urea + L-ornithine. It functions in the pathway nitrogen metabolism; urea cycle; L-ornithine and urea from L-arginine: step 1/1. May play a role in the regulation of extra-urea cycle arginine metabolism and also in down-regulation of nitric oxide synthesis. Extrahepatic arginase functions to regulate L-arginine bioavailability to nitric oxid synthase (NOS). Arginine metabolism is a critical regulator of innate and adaptive immune responses. Seems to be involved in negative regulation of the survival capacity of activated T cells. May suppress inflammation-related signaling in asthmatic airway epithelium. May play a role in promoting prenatal immune suppression. Regulates RPS6KB1 signaling, which promotes endothelial cell senescence and inflammation and implicates NOS3/eNOS dysfunction. Can inhibit endothelial autophagy independently of its enzymatic activity implicating mTORC2 signaling. Involved in vascular smooth muscle cell senescence and apoptosis independently of its enzymatic activity. The chain is Arginase-2, mitochondrial (ARG2) from Bos taurus (Bovine).